A 391-amino-acid chain; its full sequence is MFMFEKPYGMRDSLPGLYETKKKVRHSLTEVMNGWGYRLMETPTLEFYDTVGVQSAITDTQLFKLLDQNGQTLVLRPDMTGPIARVAASKLHEQAYPLRVGYAANVFRAQEREGGRPSEFEQVGIELIGDGSISADAEVIALVVFALKNAGLNSFKIAIGHVALAETLFVDVLGNTERANVLRRFLYEKNYVGYRQHVKQLPLSSIDKTRLLQLLELRGGREVTERAEEIVVSQEGKEVLAQLKSLWETLEDYGCTEYIRLDLSMVSHMSYYTGILFEVFADHVGSVIGSGGRYDQLLAHFNAPAPATGFGLRLDRLLEALDVKEINEPQEAVIFSKEQRLEAFAFAEKERSKGKKIVLQDLAGIENIDAMTKAFEQVTYFIGARKGEQNG.

It belongs to the class-II aminoacyl-tRNA synthetase family. HisZ subfamily. In terms of assembly, heteromultimer composed of HisG and HisZ subunits.

It localises to the cytoplasm. It functions in the pathway amino-acid biosynthesis; L-histidine biosynthesis; L-histidine from 5-phospho-alpha-D-ribose 1-diphosphate: step 1/9. Its function is as follows. Required for the first step of histidine biosynthesis. May allow the feedback regulation of ATP phosphoribosyltransferase activity by histidine. This is ATP phosphoribosyltransferase regulatory subunit from Bacillus pumilus (strain SAFR-032).